Reading from the N-terminus, the 1692-residue chain is Cullin-7 (1692 aa).

The CPH domain maps to 348–421 (RTAFASVNTY…HWHMLEILGF (74 aa)). One can recognise a DOC domain in the interval 791 to 970 (PIQIPFFDVF…HTRLFYMVRA (180 aa)). Residues 1319-1335 (VAHEDSGKEHKSKKEDA) are compositionally biased toward basic and acidic residues. Positions 1319–1374 (VAHEDSGKEHKSKKEDAAGETAAVAMADEEEEEGKKEEGEEEEGEGEEELEEEEER) are disordered. Acidic residues predominate over residues 1357-1374 (GEEEEGEGEEELEEEEER). Residue K1570 forms a Glycyl lysine isopeptide (Lys-Gly) (interchain with G-Cter in NEDD8) linkage.

The protein belongs to the cullin family. As to quaternary structure, component of the 3M complex, composed of core components CUL7, CCDC8 and OBSL1. Component of the Cul7-RING(FBXW8) complex consisting of CUL7, RBX1, SKP1 and FBXW8. Within the Cul7-RING(FBXW8) complex interacts with FBXW8 and RBX1, but not with SKP1. Interacts with CUL1 (via the C-terminal domain); the interaction seems to be mediated by FBXW8; it is likely specific to FBXW8, but not other F-box proteins. Interacts (via the CPH domain) with p53/TP53; the interaction preferentially involves tetrameric and dimeric p53/TP53; this interaction recruits p53/TP53 for ubiquitination by neddylated CUL1-RBX1. The CUL7-CUL9 heterodimer seems to interact specifically with p53/TP53. Interacts with FBXW8; interaction is mutually exclusive of binding to CUL9 or p53/TP53. Interacts with CUL9; leading to inhibited CUL9 activity. Interacts with OBSL1. Interacts (as part of the 3M complex) with HDAC4 and HDAC5; it is negatively regulated by ANKRA2.

Its subcellular location is the cytoplasm. It is found in the cytoskeleton. The protein resides in the microtubule organizing center. It localises to the centrosome. The protein localises to the perinuclear region. Its subcellular location is the golgi apparatus. It participates in protein modification; protein ubiquitination. Core component of the 3M and Cul7-RING(FBXW8) complexes, which mediate the ubiquitination and subsequent proteasomal degradation of target proteins. Core component of the 3M complex, a complex required to regulate microtubule dynamics and genome integrity. It is unclear how the 3M complex regulates microtubules, it could act by controlling the level of a microtubule stabilizer. The Cul7-RING(FBXW8) complex alone lacks ubiquitination activity and does not promote polyubiquitination and proteasomal degradation of p53/TP53. However it mediates recruitment of p53/TP53 for ubiquitination by neddylated CUL1-RBX1. Interaction with CUL9 is required to inhibit CUL9 activity and ubiquitination of BIRC5. The Cul7-RING(FBXW8) complex also mediates ubiquitination and consequent degradation of target proteins such as GORASP1, IRS1 and MAP4K1/HPK1. Ubiquitination of GORASP1 regulates Golgi morphogenesis and dendrite patterning in brain. Mediates ubiquitination and degradation of IRS1 in a mTOR-dependent manner: the Cul7-RING(FBXW8) complex recognizes and binds IRS1 previously phosphorylated by S6 kinase (RPS6KB1 or RPS6KB2). The Cul7-RING(FBXW8) complex also mediates ubiquitination of MAP4K1/HPK1: recognizes and binds autophosphorylated MAP4K1/HPK1, leading to its degradation, thereby affecting cell proliferation and differentiation. Acts as a regulator in trophoblast cell epithelial-mesenchymal transition and placental development. While the Cul7-RING(FBXW8) and the 3M complexes are associated and involved in common processes, CUL7 and the Cul7-RING(FBXW8) complex may have additional functions. Probably plays a role in the degradation of proteins involved in endothelial proliferation and/or differentiation. This Rattus norvegicus (Rat) protein is Cullin-7 (Cul7).